A 206-amino-acid chain; its full sequence is Ion-translocating oxidoreductase complex subunit G (206 aa).

Residues Gly-9–Met-29 traverse the membrane as a helical segment. Thr-174 carries the FMN phosphoryl threonine modification.

The protein belongs to the RnfG family. The complex is composed of six subunits: RsxA, RsxB, RsxC, RsxD, RsxE and RsxG. Requires FMN as cofactor.

It localises to the cell inner membrane. Functionally, part of a membrane-bound complex that couples electron transfer with translocation of ions across the membrane. Required to maintain the reduced state of SoxR. This chain is Ion-translocating oxidoreductase complex subunit G, found in Escherichia coli O157:H7.